The following is a 436-amino-acid chain: UBX domain-containing protein 7 (436 aa).

A Glycyl lysine isopeptide (Lys-Gly) (interchain with G-Cter in ubiquitin) cross-link involves residue lysine 19. Positions 115 to 141 are disordered; it reads AGESSSRETNPGLAREEKSSRDVHRKN. Residues 212–290 form the UBX domain; that stretch reads LHSSKCVLQI…ELTPRSALLL (79 aa). Basic and acidic residues predominate over residues 325 to 346; that stretch reads DKDPEVTSQREETSKPNRHEVR. Disordered stretches follow at residues 325–357 and 371–436; these read DKDP…AASS and SSAH…EDKK. A compositionally biased stretch (low complexity) spans 347–357; the sequence is SSTPLSGAASS. Positions 371–408 are enriched in polar residues; sequence SSAHASPMLTPSGTRYPSETNLTTSRSVSPNVFQFVNN. Serine 388 carries the phosphoserine modification. The span at 426–436 shows a compositional bias: basic and acidic residues; the sequence is HLEKKKDEDKK.

In terms of assembly, interacts with CDC48.

It localises to the endoplasmic reticulum. Functionally, involved in CDC48-dependent protein degradation through the ubiquitin/proteasome pathway. The sequence is that of UBX domain-containing protein 7 (UBX7) from Saccharomyces cerevisiae (strain ATCC 204508 / S288c) (Baker's yeast).